A 240-amino-acid chain; its full sequence is Zinc finger CCCH domain-containing protein 52 (240 aa).

Disordered stretches follow at residues Met-1–Ser-37 and Ser-81–Gly-106. The segment at Gly-36 to Pro-64 adopts a C3H1-type 1 zinc-finger fold. Residues Gly-89 to Gly-104 are compositionally biased toward gly residues. The KH domain maps to Ala-113–Val-177. The segment at Asn-205 to Ser-232 adopts a C3H1-type 2 zinc-finger fold.

The sequence is that of Zinc finger CCCH domain-containing protein 52 from Arabidopsis thaliana (Mouse-ear cress).